We begin with the raw amino-acid sequence, 164 residues long: Transcriptional regulator MraZ (164 aa).

SpoVT-AbrB domains lie at 7-63 (REQH…EPAV) and 92-135 (LDQL…NPDR).

This sequence belongs to the MraZ family. In terms of assembly, forms oligomers.

The protein localises to the cytoplasm. It localises to the nucleoid. This Chlorobaculum parvum (strain DSM 263 / NCIMB 8327) (Chlorobium vibrioforme subsp. thiosulfatophilum) protein is Transcriptional regulator MraZ.